The following is a 71-amino-acid chain: uncharacterized protein (71 aa).

It belongs to the varicellovirus ORF57 protein family.

This is an uncharacterized protein from Homo sapiens (Human).